The chain runs to 306 residues: Tryptophan 2,3-dioxygenase (306 aa).

Residues 1–33 are disordered; the sequence is MQPPGDDAAPRCPFAGAHAPDAPHVPEAAGDDA. Substrate is bound by residues 75–79, Tyr137, and Arg141; that span reads FIIQH. Residue His264 participates in heme binding. Thr278 contacts substrate.

This sequence belongs to the tryptophan 2,3-dioxygenase family. Homotetramer. Heme serves as cofactor.

The enzyme catalyses L-tryptophan + O2 = N-formyl-L-kynurenine. It participates in amino-acid degradation; L-tryptophan degradation via kynurenine pathway; L-kynurenine from L-tryptophan: step 1/2. Heme-dependent dioxygenase that catalyzes the oxidative cleavage of the L-tryptophan (L-Trp) pyrrole ring and converts L-tryptophan to N-formyl-L-kynurenine. Catalyzes the oxidative cleavage of the indole moiety. This chain is Tryptophan 2,3-dioxygenase, found in Burkholderia pseudomallei (strain 668).